A 299-amino-acid polypeptide reads, in one-letter code: Oxygen-dependent coproporphyrinogen-III oxidase (299 aa).

Position 92 (serine 92) interacts with substrate. Mn(2+) contacts are provided by histidine 96 and histidine 106. Histidine 106 (proton donor) is an active-site residue. 108 to 110 (NVR) contacts substrate. The Mn(2+) site is built by histidine 145 and histidine 175. Residues 240–275 (YVEFNLVWDRGTLFGLQTGGRTESILMSMPPLVRWE) are important for dimerization. A substrate-binding site is contributed by 258–260 (GGR).

The protein belongs to the aerobic coproporphyrinogen-III oxidase family. In terms of assembly, homodimer. Mn(2+) serves as cofactor.

The protein resides in the cytoplasm. The catalysed reaction is coproporphyrinogen III + O2 + 2 H(+) = protoporphyrinogen IX + 2 CO2 + 2 H2O. It functions in the pathway porphyrin-containing compound metabolism; protoporphyrin-IX biosynthesis; protoporphyrinogen-IX from coproporphyrinogen-III (O2 route): step 1/1. Involved in the heme biosynthesis. Catalyzes the aerobic oxidative decarboxylation of propionate groups of rings A and B of coproporphyrinogen-III to yield the vinyl groups in protoporphyrinogen-IX. This Escherichia fergusonii (strain ATCC 35469 / DSM 13698 / CCUG 18766 / IAM 14443 / JCM 21226 / LMG 7866 / NBRC 102419 / NCTC 12128 / CDC 0568-73) protein is Oxygen-dependent coproporphyrinogen-III oxidase.